The following is a 638-amino-acid chain: MNRQVCKKSFSGRSQGFSGRSAVVSGSSRMSCVARSGGAGGGACGFRSGAGSFGSRSLYNLGSNKSISISVAAGSSRAGGFGGGRSSCGFAGGYGGGFGGSYGGGFGGGRGVGSGFGGAGGFGGAGGFGGPGVFGGPGSFGGPGGFGPGGFPGGIQEVIVNQSLLQPLNVEIDPQIGQVKAQEREQIKTLNNKFASFIDKVRFLEQQNKVLETKWELLQQQTTGSGPSSLEPCFESYISFLCKQLDSLLGERGNLEGELKSMQDLVEDFKKKYEDEINKRTAAENEFVGLKKDVDAAFMNKVELQAKVDSLTDEVSFLRTLYEMELSQMQSHASDTSVVLSMDNNRCLDLGSIIAEVRAQYEEIAQRSKSEAEALYQTKLGELQTTAGRHGDDLRNTKSEIMELNRMIQRLRAEIENVKKQNANLQTAIAEAEQRGEMALKDANAKLQDLQTALQKAKDDLARLLRDYQELMNVKLALDVEIATYRKLLEGEECRMSGECQSAVCISVVSNVTSTSGSSGSSRGVFGGVSGSGSGGYKGGSSSSSSSGYGVSGGSGSGYGGVSSGSTGGRGSSGSYQSSSSGSRLGGAGSISVSHSGMGSSSGSIQTSGGSGYKSGGGGSTSIRFSQTTSSSQHSSTK.

The tract at residues 1 to 182 (MNRQVCKKSF…DPQIGQVKAQ (182 aa)) is head. Omega-N-methylarginine occurs at positions 85 and 110. Positions 183–218 (EREQIKTLNNKFASFIDKVRFLEQQNKVLETKWELL) are coil 1A. The region spanning 183–496 (EREQIKTLNN…KLLEGEECRM (314 aa)) is the IF rod domain. Positions 219-237 (QQQTTGSGPSSLEPCFESY) are linker 1. The interval 238–329 (ISFLCKQLDS…TLYEMELSQM (92 aa)) is coil 1B. The tract at residues 330-353 (QSHASDTSVVLSMDNNRCLDLGSI) is linker 12. Residues 354–492 (IAEVRAQYEE…ATYRKLLEGE (139 aa)) form a coil 2 region. The tail stretch occupies residues 493 to 638 (ECRMSGECQS…TSSSQHSSTK (146 aa)). Positions 532–638 (SGSGGYKGGS…TSSSQHSSTK (107 aa)) are disordered. The segment covering 540–549 (GSSSSSSSGY) has biased composition (low complexity). Residues 550–572 (GVSGGSGSGYGGVSSGSTGGRGS) are compositionally biased toward gly residues. The span at 573 to 583 (SGSYQSSSSGS) shows a compositional bias: low complexity. The residue at position 584 (Arg-584) is an Omega-N-methylarginine. Over residues 590 to 608 (SISVSHSGMGSSSGSIQTS) the composition is skewed to low complexity. Residues 609–620 (GGSGYKSGGGGS) are compositionally biased toward gly residues. Residues 626–638 (SQTTSSSQHSSTK) show a composition bias toward low complexity.

Belongs to the intermediate filament family. As to quaternary structure, heterotetramer of two type I and two type II keratins.

Its function is as follows. Probably contributes to terminal cornification. This is Keratin, type II cytoskeletal 2 oral (KRT76) from Homo sapiens (Human).